The following is a 319-amino-acid chain: Carbonic anhydrase 6 (319 aa).

The first 14 residues, 1–14, serve as a signal peptide directing secretion; that stretch reads MITLLFLLVVGAQA. The region spanning 16–273 is the Alpha-carbonic anhydrase domain; that stretch reads HEWTYSEGVL…LNHRVVEANF (258 aa). A disulfide bridge links cysteine 37 with cysteine 219. Asparagine 62 carries an N-linked (GlcNAc...) asparagine glycan. Catalysis depends on histidine 80, which acts as the Proton donor/acceptor. 3 residues coordinate Zn(2+): histidine 106, histidine 108, and histidine 133. Residue 215–216 coordinates substrate; it reads TT. N-linked (GlcNAc...) asparagine glycosylation is present at asparagine 251.

It belongs to the alpha-carbonic anhydrase family. It depends on Zn(2+) as a cofactor. Major constituent of saliva.

It localises to the secreted. The enzyme catalyses hydrogencarbonate + H(+) = CO2 + H2O. Its function is as follows. Reversible hydration of carbon dioxide. Its role in saliva is unknown. The polypeptide is Carbonic anhydrase 6 (CA6) (Bos taurus (Bovine)).